A 446-amino-acid chain; its full sequence is Deoxyguanosinetriphosphate triphosphohydrolase-like protein (446 aa).

Residues 1 to 28 (MSSSVWQERRHGEDKQRRNDHRSPFQRD) form a disordered region. Residues 7-28 (QERRHGEDKQRRNDHRSPFQRD) are compositionally biased toward basic and acidic residues. One can recognise an HD domain in the interval 59-252 (RLTHSLEVSQ…MELADDIAYA (194 aa)).

Belongs to the dGTPase family. Type 2 subfamily.

The chain is Deoxyguanosinetriphosphate triphosphohydrolase-like protein from Shewanella sp. (strain MR-4).